The following is a 232-amino-acid chain: Ion-translocating oxidoreductase complex subunit E (232 aa).

6 helical membrane-spanning segments follow: residues 12-31 (LWRN…LLAV), 39-59 (LGLG…VSAL), 69-89 (IPIY…LINA), 92-112 (FGLY…CIVI), 125-145 (ALAA…LLLL), and 182-202 (PFLL…MLVG).

Belongs to the NqrDE/RnfAE family. As to quaternary structure, the complex is composed of six subunits: RnfA, RnfB, RnfC, RnfD, RnfE and RnfG.

It is found in the cell inner membrane. In terms of biological role, part of a membrane-bound complex that couples electron transfer with translocation of ions across the membrane. In Sodalis glossinidius (strain morsitans), this protein is Ion-translocating oxidoreductase complex subunit E.